A 201-amino-acid chain; its full sequence is 3-isopropylmalate dehydratase small subunit (201 aa).

It belongs to the LeuD family. LeuD type 1 subfamily. In terms of assembly, heterodimer of LeuC and LeuD.

The catalysed reaction is (2R,3S)-3-isopropylmalate = (2S)-2-isopropylmalate. It participates in amino-acid biosynthesis; L-leucine biosynthesis; L-leucine from 3-methyl-2-oxobutanoate: step 2/4. Functionally, catalyzes the isomerization between 2-isopropylmalate and 3-isopropylmalate, via the formation of 2-isopropylmaleate. In Dinoroseobacter shibae (strain DSM 16493 / NCIMB 14021 / DFL 12), this protein is 3-isopropylmalate dehydratase small subunit.